The following is an 829-amino-acid chain: DNA topoisomerase 1 (829 aa).

Residues Met1–Lys248 form a disordered region. The span at His22–Lys36 shows a compositional bias: basic residues. Basic and acidic residues-rich tracts occupy residues Lys37–Lys58, Lys68–Lys159, and Lys193–Lys220. Interaction with DNA regions lie at residues Lys481–Tyr482, Arg544–Lys549, and Thr641–Lys643. The Topo IB-type catalytic domain maps to Ser488 to Phe821. The active-site O-(3'-phospho-DNA)-tyrosine intermediate is the Tyr779.

It belongs to the type IB topoisomerase family. In terms of assembly, monomer.

The protein resides in the nucleus. It catalyses the reaction ATP-independent breakage of single-stranded DNA, followed by passage and rejoining.. Its function is as follows. Releases the supercoiling and torsional tension of DNA introduced during the DNA replication and transcription by transiently cleaving and rejoining one strand of the DNA duplex. Introduces a single-strand break via transesterification at a target site in duplex DNA. The scissile phosphodiester is attacked by the catalytic tyrosine of the enzyme, resulting in the formation of a DNA-(3'-phosphotyrosyl)-enzyme intermediate and the expulsion of a 5'-OH DNA strand. TThe free DNA strand then rotates around the intact phosphodiester bond on the opposing strand, thus removing DNA supercoils. Finally, in the religation step, the DNA 5'-OH attacks the covalent intermediate to expel the active-site tyrosine and restore the DNA phosphodiester backbone. May play a role in the circadian transcription of the core circadian clock component BMAL1. In Xenopus laevis (African clawed frog), this protein is DNA topoisomerase 1 (top1).